A 2294-amino-acid chain; its full sequence is Protein Ycf2 (2294 aa).

Residue 1648–1655 participates in ATP binding; the sequence is GSIGTGRS.

This sequence belongs to the Ycf2 family.

The protein localises to the plastid. The protein resides in the chloroplast stroma. Probable ATPase of unknown function. Its presence in a non-photosynthetic plant (Epifagus virginiana) and experiments in tobacco indicate that it has an essential function which is probably not related to photosynthesis. The chain is Protein Ycf2 from Arabidopsis thaliana (Mouse-ear cress).